Reading from the N-terminus, the 21-residue chain is Peptide Hact-2 (21 aa).

3 disulfide bridges follow: C1-C18, C5-C14, and C9-C20.

Expressed in tentacles.

It localises to the nematocyst. The protein localises to the secreted. Peptide of unknown function. Does not exhibit antimicrobial activity against Escherichia coli and Staphylococcus aureus. Promotes cell proliferation of human fibroblast skin cells. Does not exhibit any effect on voltage-gated ion channels, including potassium, sodium, and calcium channels. The sequence is that of Peptide Hact-2 from Heliofungia actiniformis (Mushroom coral).